A 258-amino-acid chain; its full sequence is MNEIHKTAIISPKAEIDKEVVIGPYCIIGDNVKIGRGTRLINHVQIEGITEIGQNCTIFPFTTIGFPPQDIKYKGEPTGVKIGNNNTIREYVTIHRASVAGDGWTVIGDSNFIMAYVHIAHDCKIGNSVIMANLATLAGHVQVEDFAFIGGLVAIHQFTRIGAYAMIGGFSGVGQDVPPFTMASGPRAKLYGLNSVGLKRRGFSDETINILKKAYKILFRDKLQLKEAIDKVKKELPQIPEIIHLLEFIEANKRGICR.

It belongs to the transferase hexapeptide repeat family. LpxA subfamily. Homotrimer.

Its subcellular location is the cytoplasm. It catalyses the reaction a (3R)-hydroxyacyl-[ACP] + UDP-N-acetyl-alpha-D-glucosamine = a UDP-3-O-[(3R)-3-hydroxyacyl]-N-acetyl-alpha-D-glucosamine + holo-[ACP]. Its pathway is glycolipid biosynthesis; lipid IV(A) biosynthesis; lipid IV(A) from (3R)-3-hydroxytetradecanoyl-[acyl-carrier-protein] and UDP-N-acetyl-alpha-D-glucosamine: step 1/6. Its function is as follows. Involved in the biosynthesis of lipid A, a phosphorylated glycolipid that anchors the lipopolysaccharide to the outer membrane of the cell. This Thermodesulfovibrio yellowstonii (strain ATCC 51303 / DSM 11347 / YP87) protein is Acyl-[acyl-carrier-protein]--UDP-N-acetylglucosamine O-acyltransferase.